The chain runs to 183 residues: MAEQEYEIGEDPSLLIVDDDEPFLRRLARAMEKRGFQPEMAETVAAGKAIASARPPAYAVVDLRLEDGTGLDVVETLREKRPDAKIVVLTGYGAIATAVAAVKVGATDYLSKPADANDVTAALLSNGEALPPPPENPMSADRVRWEHIQRVYEQCDRNVSETARRLNMHRRTLQRILAKRSPR.

Residues serine 13 to glycine 127 form the Response regulatory domain. Aspartate 62 carries the post-translational modification 4-aspartylphosphate.

Phosphorylated by RegB.

In terms of biological role, member of the two-component regulatory system RegB/RegA. Involved in transactivating anaerobic expression of the photosynthetic apparatus. It is a transcriptional regulator that is responsible for activating expression of the puf, puh, and puc operons in response to a decrease in oxygen tension. This is Photosynthetic apparatus regulatory protein RegA (regA) from Rhodovulum sulfidophilum (Rhodobacter sulfidophilus).